Here is a 110-residue protein sequence, read N- to C-terminus: HTH-type transcriptional regulator TnrA (110 aa).

One can recognise an HTH merR-type domain in the interval 13–81 (VISIGIVSEL…TAEILKDMRK (69 aa)). Positions 16-35 (IGIVSELTGLSVRQIRYYEE) form a DNA-binding region, H-T-H motif.

In terms of assembly, homodimer. Under conditions of nitrogen excess, TnrA forms a stable complex with feedback-inhibited GlnA. Interacts with GlnK-AmtB complex.

The protein resides in the cell membrane. Its activity is regulated as follows. Under conditions of nitrogen excess, the DNA-binding activity is inhibited by the formation of a stable complex with feedback-inhibited GlnA. The presence of glutamine and AMP increases the inhibitory activity of glutamine synthetase by more than 1000-fold. Its function is as follows. Transcription regulator that actives the transcription of genes required for nitrogen assimilation such as nrgAB (ammonium transport), nasABCDEF (nitrate/nitrite assimilation), ureABC (urea degradation) and gabP (GABA transport), during nitrogen limitation. Also represses glnRA and gltAB in the absence of ammonium. On the contrary of the MerR members, which require longer DNA sites for high-affinity binding, TnrA requires a DNA sequence of 17 nucleotides as minimal binding site. The polypeptide is HTH-type transcriptional regulator TnrA (Bacillus subtilis (strain 168)).